The chain runs to 278 residues: Envelope glycoprotein L (278 aa).

The first 32 residues, 1 to 32 (MCRRPDCGFSFSPGPVILLWCCLLLSIVSSAA), serve as a signal peptide directing secretion. One can recognise a gL betaherpesvirus-type domain in the interval 43-256 (VPAECPELTR…DKYYAGLPPE (214 aa)). Cysteines 154 and 159 form a disulfide.

The protein belongs to the herpesviridae glycoprotein L (gL) family. Betaherpesvirinae gL subfamily. Interacts with glycoprotein H (gH); this interaction is necessary for the correct processing and cell surface expression of gH. Forms the envelope pentamer complex (PC) composed of gH, gL, UL128, UL130, and UL131A. The pentamer interacts with host NRP2. Forms the envelope trimer complex composed of gH, gL, and gO. The trimer interacts with host PDGFRA. The trimer also interacts with host EPHA2.

Its subcellular location is the virion membrane. The protein localises to the host cell membrane. The protein resides in the host Golgi apparatus. It localises to the host trans-Golgi network. Its function is as follows. The heterodimer glycoprotein H-glycoprotein L is required for the fusion of viral and plasma membranes leading to virus entry into the host cell. Acts as a functional inhibitor of gH and maintains gH in an inhibited form. Upon binding to host integrins, gL dissociates from gH leading to activation of the viral fusion glycoproteins gB and gH. In human cytomegalovirus, forms two distincts complexes to mediate viral entry, a trimer and a pentamer at the surface of the virion envelope. The gH-gL-gO trimer is required for infection in fibroblasts by interacting with host PDGFRA, and in glioblastoma cells by interacting with host EPHA2. The gH-gL-UL128-UL130-UL131A pentamer is essential for viral entry in epithelial, endothelial and myeloid cells via interaction with host NRP2. The polypeptide is Envelope glycoprotein L (Human cytomegalovirus (strain 119) (HHV-5)).